Reading from the N-terminus, the 80-residue chain is Nuclear protein 1 (80 aa).

A disordered region spans residues 40–80 (GGRKGRTKREAAANTNRPSPGGHERKLLTKFQNSERKKAWR). The segment covering 61–80 (GHERKLLTKFQNSERKKAWR) has biased composition (basic and acidic residues). The Nuclear localization signal signature appears at 64 to 80 (RKLLTKFQNSERKKAWR).

This sequence belongs to the NUPR family. As to quaternary structure, monomer. Directly interacts with MSL1 and binds MORF4L1, two components of histone acetyltransferase complex; the interaction with MORF4L1 may be mediated by MSL1. Interacts with EP300; this interaction enhances the effect of EP300 on PAX2 transcription factor activity. Interacts with PAXIP1; this interaction prevents PAXIP1 inhibition of PAX2 transcription factor activity. Interacts with COPS5; this interaction allows COPS5-dependent CDKN1B nuclear to cytoplasm translocation. Interacts with RNF2. Interacts with FOXO3; this interaction represses FOXO3 transactivation. Interacts with PTMA; regulates apoptotic process. Interacts with MYOD1, EP300 and DDX5; this interaction coordinates the association of anti-proliferative and pro-myogenic proteins at the myogenin promoter. Interacts with TP53; interaction is stress-dependent. Forms a complex with EP300 and TP53; this complex binds CDKN1A promoter leading to transcriptional induction of CDKN1A. In terms of processing, phosphorylated. Phosphorylation promotes DNA-binding activity. Acetylated. Strongly activated in pancreatic acinar cells during the acute phase of pancreatitis, in developing pancreas and during pancreatic regeneration.

It localises to the nucleus. The protein resides in the cytoplasm. It is found in the perinuclear region. Its function is as follows. Transcription regulator that converts stress signals into a program of gene expression that empowers cells with resistance to the stress induced by a change in their microenvironment. Thereby participates in the regulation of many processes namely cell-cycle, apoptosis, autophagy and DNA repair responses. Controls cell cycle progression and protects cells from genotoxic stress induced by doxorubicin through the complex formation with TP53 and EP300 that binds CDKN1A promoter leading to transcriptional induction of CDKN1A. Protects pancreatic cancer cells from stress-induced cell death by binding the RELB promoter and activating its transcription, leading to IER3 transactivation. Negatively regulates apoptosis through interaction with PTMA. Inhibits autophagy-induced apoptosis in cardiac cells through FOXO3 interaction, inducing cytoplasmic translocation of FOXO3 thereby preventing the FOXO3 association with the pro-autophagic BNIP3 promoter. Inhibits cell growth and facilitates programmed cell death by apoptosis after adriamycin-induced DNA damage through transactivation of TP53. Regulates methamphetamine-induced apoptosis and autophagy through DDIT3-mediated endoplasmic reticulum stress pathway. Participates in DNA repair following gamma-irradiation by facilitating DNA access of the transcription machinery through interaction with MSL1 leading to inhibition of histone H4' Lys-16' acetylation (H4K16ac). Coactivator of PAX2 transcription factor activity, both by recruiting the EP300 cofactor to increase PAX2 transcription factor activity and by binding PAXIP1 to suppress PAXIP1-induced inhibition on PAX2. Positively regulates cell cycle progression through interaction with COPS5 inducing cytoplasmic translocation of CDKN1B leading to the CDKN1B degradation. Coordinates, through its interaction with EP300, the assiociation of MYOD1, EP300 and DDX5 to the MYOG promoter, leading to inhibition of cell-cycle progression and myogenic differentiation promotion. Negatively regulates beta cell proliferation via inhibition of cell-cycle regulatory genes expression through the suppression of their promoter activities. Also required for LHB expression and ovarian maturation. Exacerbates CNS inflammation and demyelination upon cuprizone treatment. This Rattus norvegicus (Rat) protein is Nuclear protein 1.